The following is a 597-amino-acid chain: Elongation factor 4 (597 aa).

One can recognise a tr-type G domain in the interval Lys2 to Thr184. Residues Asp14–Thr19 and Asn131–Asp134 contribute to the GTP site.

This sequence belongs to the TRAFAC class translation factor GTPase superfamily. Classic translation factor GTPase family. LepA subfamily.

The protein localises to the cell inner membrane. It carries out the reaction GTP + H2O = GDP + phosphate + H(+). Its function is as follows. Required for accurate and efficient protein synthesis under certain stress conditions. May act as a fidelity factor of the translation reaction, by catalyzing a one-codon backward translocation of tRNAs on improperly translocated ribosomes. Back-translocation proceeds from a post-translocation (POST) complex to a pre-translocation (PRE) complex, thus giving elongation factor G a second chance to translocate the tRNAs correctly. Binds to ribosomes in a GTP-dependent manner. This Neisseria meningitidis serogroup C / serotype 2a (strain ATCC 700532 / DSM 15464 / FAM18) protein is Elongation factor 4.